The following is a 190-amino-acid chain: CASP-like protein 2U1 (190 aa).

Topologically, residues M1–A16 are cytoplasmic. A helical transmembrane segment spans residues V17–V37. At A38–K59 the chain is on the extracellular side. The chain crosses the membrane as a helical span at residues A60–A80. Residues R81–L100 lie on the Cytoplasmic side of the membrane. A helical membrane pass occupies residues L101–V121. At A122–Q152 the chain is on the extracellular side. Residues A153–L173 form a helical membrane-spanning segment. At S174–T190 the chain is on the cytoplasmic side.

This sequence belongs to the Casparian strip membrane proteins (CASP) family. In terms of assembly, homodimer and heterodimers.

The protein localises to the cell membrane. This Zea mays (Maize) protein is CASP-like protein 2U1.